The primary structure comprises 241 residues: Interleukin-6 (241 aa).

The interval 1–25 (MNFTEGCEATGRRPGSAGSRRRRAP) is disordered. A signal peptide spans 1 to 46 (MNFTEGCEATGRRPGSAGSRRRRAPRPGPVALLPLLLPLLLPPAAA). Cys122 and Cys132 are disulfide-bonded.

It belongs to the IL-6 superfamily. As to quaternary structure, component of a hexamer of two molecules each of IL6, IL6R and IL6ST; first binds to IL6R to associate with the signaling subunit IL6ST.

The protein resides in the secreted. Cytokine with a wide variety of biological functions in immunity, tissue regeneration, and metabolism. Binds to IL6R, then the complex associates to the signaling subunit IL6ST/gp130 to trigger the intracellular IL6-signaling pathway. The interaction with the membrane-bound IL6R and IL6ST stimulates 'classic signaling', whereas the binding of IL6 and soluble IL6R to IL6ST stimulates 'trans-signaling'. Alternatively, 'cluster signaling' occurs when membrane-bound IL6:IL6R complexes on transmitter cells activate IL6ST receptors on neighboring receiver cells. The chain is Interleukin-6 (IL6) from Gallus gallus (Chicken).